Reading from the N-terminus, the 587-residue chain is Polyphenol oxidase E, chloroplastic (587 aa).

A chloroplast-targeting transit peptide spans 1-87; the sequence is MSSSSSITTT…AANLAPLATA (87 aa). Cystine bridges form between Cys98/Cys114 and Cys113/Cys180. Cu cation contacts are provided by His179, His197, His206, His328, His332, and His363. A cross-link (2'-(S-cysteinyl)-histidine (Cys-His)) is located at residues 183 to 197; that stretch reads CNGAYKVGGKELQVH.

Belongs to the tyrosinase family. Cu(2+) serves as cofactor.

The protein localises to the plastid. It localises to the chloroplast thylakoid lumen. The catalysed reaction is 2 catechol + O2 = 2 1,2-benzoquinone + 2 H2O. Catalyzes the oxidation of mono- and o-diphenols to o-diquinones. The chain is Polyphenol oxidase E, chloroplastic from Solanum lycopersicum (Tomato).